A 428-amino-acid chain; its full sequence is Serine--tRNA ligase (428 aa).

235–237 is an L-serine binding site; the sequence is TAE. Residue 266 to 268 participates in ATP binding; the sequence is RSE. Residue Glu-289 coordinates L-serine. 353 to 356 is an ATP binding site; sequence EISS. Ser-389 provides a ligand contact to L-serine.

Belongs to the class-II aminoacyl-tRNA synthetase family. Type-1 seryl-tRNA synthetase subfamily. Homodimer. The tRNA molecule binds across the dimer.

The protein localises to the cytoplasm. It catalyses the reaction tRNA(Ser) + L-serine + ATP = L-seryl-tRNA(Ser) + AMP + diphosphate + H(+). The catalysed reaction is tRNA(Sec) + L-serine + ATP = L-seryl-tRNA(Sec) + AMP + diphosphate + H(+). It participates in aminoacyl-tRNA biosynthesis; selenocysteinyl-tRNA(Sec) biosynthesis; L-seryl-tRNA(Sec) from L-serine and tRNA(Sec): step 1/1. Its function is as follows. Catalyzes the attachment of serine to tRNA(Ser). Is also able to aminoacylate tRNA(Sec) with serine, to form the misacylated tRNA L-seryl-tRNA(Sec), which will be further converted into selenocysteinyl-tRNA(Sec). This is Serine--tRNA ligase from Shewanella loihica (strain ATCC BAA-1088 / PV-4).